The sequence spans 707 residues: Vicilin-like seed storage protein At2g18540 (707 aa).

The N-terminal stretch at methionine 1–serine 24 is a signal peptide. The 144-residue stretch at proline 42–arginine 185 folds into the Cupin type-1 1 domain. N-linked (GlcNAc...) asparagine glycans are attached at residues asparagine 60, asparagine 203, asparagine 285, asparagine 356, asparagine 396, and asparagine 399. Residues phenylalanine 247 to lysine 403 enclose the Cupin type-1 2 domain. A compositionally biased stretch (basic and acidic residues) spans glutamate 439–arginine 696. Positions glutamate 439–isoleucine 707 are disordered. Over residues proline 698–isoleucine 707 the composition is skewed to pro residues.

The protein belongs to the 7S seed storage protein family.

Seed storage protein. The sequence is that of Vicilin-like seed storage protein At2g18540 from Arabidopsis thaliana (Mouse-ear cress).